An 89-amino-acid polypeptide reads, in one-letter code: Small ribosomal subunit protein uS15 (89 aa).

Over residues 1 to 21 (MAITQERKNQLISEFKTHESD) the composition is skewed to basic and acidic residues. Residues 1-23 (MAITQERKNQLISEFKTHESDTG) are disordered.

Belongs to the universal ribosomal protein uS15 family. Part of the 30S ribosomal subunit. Forms a bridge to the 50S subunit in the 70S ribosome, contacting the 23S rRNA.

Its function is as follows. One of the primary rRNA binding proteins, it binds directly to 16S rRNA where it helps nucleate assembly of the platform of the 30S subunit by binding and bridging several RNA helices of the 16S rRNA. In terms of biological role, forms an intersubunit bridge (bridge B4) with the 23S rRNA of the 50S subunit in the ribosome. The chain is Small ribosomal subunit protein uS15 from Bacillus velezensis (strain DSM 23117 / BGSC 10A6 / LMG 26770 / FZB42) (Bacillus amyloliquefaciens subsp. plantarum).